Here is a 207-residue protein sequence, read N- to C-terminus: MQVQEKFTAETFPASPEKVTLEGKNKFLGFWLFLGGETVLFASLFATFLALRNSNAGDPPTTEMFDVTLVFIATMLLLTSSLTSVYAMYHMKNFSFGKMQLWLGITILLGAGFLGLEIYEFKHYTHEFGFTITSSALGSAFYTLVGTHGAHVAFGLMWISTLMIRNAKRGLNLYTAPKFYVASLYWHFIDVVWVFIFTVVYLMGMVG.

5 helical membrane-spanning segments follow: residues 30–50, 67–87, 101–121, 144–164, and 186–206; these read FWLF…TFLA, VTLV…SVYA, LWLG…IYEF, LVGT…TLMI, and WHFI…MGMV.

Belongs to the cytochrome c oxidase subunit 3 family.

Its subcellular location is the cell membrane. It carries out the reaction 4 Fe(II)-[cytochrome c] + O2 + 8 H(+)(in) = 4 Fe(III)-[cytochrome c] + 2 H2O + 4 H(+)(out). The protein is Cytochrome c oxidase subunit 3 (ctaE) of Bacillus subtilis (strain 168).